The following is a 180-amino-acid chain: Large ribosomal subunit protein uL5 (180 aa).

Belongs to the universal ribosomal protein uL5 family. Part of the 50S ribosomal subunit; part of the 5S rRNA/L5/L18/L25 subcomplex. Contacts the 5S rRNA and the P site tRNA. Forms a bridge to the 30S subunit in the 70S ribosome.

This is one of the proteins that bind and probably mediate the attachment of the 5S RNA into the large ribosomal subunit, where it forms part of the central protuberance. In the 70S ribosome it contacts protein S13 of the 30S subunit (bridge B1b), connecting the 2 subunits; this bridge is implicated in subunit movement. Contacts the P site tRNA; the 5S rRNA and some of its associated proteins might help stabilize positioning of ribosome-bound tRNAs. The protein is Large ribosomal subunit protein uL5 of Mesoplasma florum (strain ATCC 33453 / NBRC 100688 / NCTC 11704 / L1) (Acholeplasma florum).